A 251-amino-acid polypeptide reads, in one-letter code: Imidazole glycerol phosphate synthase subunit HisF (251 aa).

Catalysis depends on residues Asp-11 and Asp-130.

This sequence belongs to the HisA/HisF family. As to quaternary structure, heterodimer of HisH and HisF.

Its subcellular location is the cytoplasm. It carries out the reaction 5-[(5-phospho-1-deoxy-D-ribulos-1-ylimino)methylamino]-1-(5-phospho-beta-D-ribosyl)imidazole-4-carboxamide + L-glutamine = D-erythro-1-(imidazol-4-yl)glycerol 3-phosphate + 5-amino-1-(5-phospho-beta-D-ribosyl)imidazole-4-carboxamide + L-glutamate + H(+). Its pathway is amino-acid biosynthesis; L-histidine biosynthesis; L-histidine from 5-phospho-alpha-D-ribose 1-diphosphate: step 5/9. Its function is as follows. IGPS catalyzes the conversion of PRFAR and glutamine to IGP, AICAR and glutamate. The HisF subunit catalyzes the cyclization activity that produces IGP and AICAR from PRFAR using the ammonia provided by the HisH subunit. The protein is Imidazole glycerol phosphate synthase subunit HisF of Parabacteroides distasonis (strain ATCC 8503 / DSM 20701 / CIP 104284 / JCM 5825 / NCTC 11152).